The chain runs to 4579 residues: Sacsin (4579 aa).

The Ubiquitin-like domain occupies 9–84 (VPVTVLPGCV…FVNLQSKGLK (76 aa)). Lysine 943 bears the N6-acetyllysine mark. Residues serine 1779 and serine 2511 each carry the phosphoserine modification. Threonine 2516 carries the post-translational modification Phosphothreonine. The residue at position 3435 (serine 3435) is a Phosphoserine. Disordered stretches follow at residues 4248 to 4273 (PEES…TPGL) and 4279 to 4298 (LFSG…PKKL). Residues 4254 to 4267 (SRDSAPSTPTSPTE) are compositionally biased toward polar residues. Threonine 4261 carries the post-translational modification Phosphothreonine. At serine 4264 the chain carries Phosphoserine. Positions 4288–4298 (TSSKHQSPKKL) are enriched in basic residues. The J domain maps to 4306–4393 (ILKEVTSVVE…ASRFQSDKYS (88 aa)). The segment at 4405–4427 (ATSHKSERQQQNKEKCPPSAGQT) is disordered. Basic and acidic residues predominate over residues 4406 to 4420 (TSHKSERQQQNKEKC). The HEPN domain occupies 4451–4567 (LRQARANFSA…MRVMECTACI (117 aa)).

As to expression, highly expressed in the central nervous system. Also found in skeletal muscle and at low levels in pancreas.

It is found in the cytoplasm. Co-chaperone which acts as a regulator of the Hsp70 chaperone machinery and may be involved in the processing of other ataxia-linked proteins. This chain is Sacsin (SACS), found in Homo sapiens (Human).